We begin with the raw amino-acid sequence, 352 residues long: Fe(3+) ions import ATP-binding protein FbpC (352 aa).

Residues 5–239 (LHIGHLSKSF…PADLDAALFI (235 aa)) form the ABC transporter domain. 37–44 (GASGCGKT) contributes to the ATP binding site.

The protein belongs to the ABC transporter superfamily. Fe(3+) ion importer (TC 3.A.1.10) family. The complex is composed of two ATP-binding proteins (FbpC), two transmembrane proteins (FbpB) and a solute-binding protein (FbpA).

Its subcellular location is the cell inner membrane. It carries out the reaction Fe(3+)(out) + ATP + H2O = Fe(3+)(in) + ADP + phosphate + H(+). In terms of biological role, part of the ABC transporter complex FbpABC involved in Fe(3+) ions import. Responsible for energy coupling to the transport system. This is Fe(3+) ions import ATP-binding protein FbpC from Neisseria meningitidis serogroup A / serotype 4A (strain DSM 15465 / Z2491).